The chain runs to 218 residues: Riboflavin kinase (218 aa).

An N-terminal signal peptide occupies residues 1-19; the sequence is MFTWTIYVSLLLVLAGTFL. Residues Thr-72 and Asn-74 each contribute to the Mg(2+) site. Catalysis depends on Glu-155, which acts as the Nucleophile.

Belongs to the flavokinase family. The cofactor is Zn(2+). Mg(2+) serves as cofactor.

The protein resides in the microsome. It is found in the mitochondrion inner membrane. Its subcellular location is the endoplasmic reticulum. The catalysed reaction is riboflavin + ATP = FMN + ADP + H(+). The protein operates within cofactor biosynthesis; FMN biosynthesis; FMN from riboflavin (ATP route): step 1/1. Catalyzes the phosphorylation of riboflavin (vitamin B2) to form flavin mononucleotide (FMN) coenzyme. The chain is Riboflavin kinase (FMN1) from Saccharomyces cerevisiae (strain ATCC 204508 / S288c) (Baker's yeast).